The following is a 134-amino-acid chain: Thioredoxin H2-2 (134 aa).

The disordered stretch occupies residues 1 to 20; it reads MGSFFSTMFTPPPAADDGGD. Positions 3 to 130 constitute a Thioredoxin domain; sequence SFFSTMFTPP…LERKVNMFIS (128 aa). Residues cysteine 56 and cysteine 59 each act as nucleophile in the active site. Cysteine 56 and cysteine 59 are oxidised to a cystine.

The protein belongs to the thioredoxin family. Plant H-type subfamily.

It localises to the cytoplasm. In terms of biological role, probable thiol-disulfide oxidoreductase that may be involved in the redox regulation of a number of cytosolic enzymes. The polypeptide is Thioredoxin H2-2 (Oryza sativa subsp. japonica (Rice)).